The chain runs to 390 residues: Leu/Ile/Val-binding protein homolog 6 (390 aa).

A signal peptide spans methionine 1 to alanine 21.

The protein belongs to the leucine-binding protein family.

Its function is as follows. Component of an amino-acid transport system. The protein is Leu/Ile/Val-binding protein homolog 6 of Brucella melitensis biotype 1 (strain ATCC 23456 / CCUG 17765 / NCTC 10094 / 16M).